Here is a 331-residue protein sequence, read N- to C-terminus: uncharacterized protein (331 aa).

Belongs to the proline racemase family.

This is an uncharacterized protein from Bacillus anthracis.